We begin with the raw amino-acid sequence, 344 residues long: L-rhamnose-proton symporter (344 aa).

Helical transmembrane passes span 4–24 (AITM…CFYA), 38–58 (WSVG…ALLL), 68–88 (FSLS…IGNI), 101–121 (MGIG…TPII), 137–157 (TLLG…AGQL), 175–195 (LVLA…MNAA), 214–234 (LPSY…FCFI), 259–279 (VLLS…YAWG), 290–310 (ISWM…GLVL), and 323–343 (VLSL…IGMA).

Belongs to the L-rhamnose transporter (TC 2.A.7.6) family.

It is found in the cell inner membrane. It carries out the reaction L-rhamnopyranose(in) + H(+)(in) = L-rhamnopyranose(out) + H(+)(out). Its function is as follows. Uptake of L-rhamnose across the cytoplasmic membrane with the concomitant transport of protons into the cell (symport system). The protein is L-rhamnose-proton symporter of Shigella sonnei (strain Ss046).